The primary structure comprises 430 residues: MHSWPTPDIPALDGTPVPLALYDTADQQVKPVEVPPSGSGTPVGMYVCGITPYDSTHLGHAATYLAFDLIYRVLLDNDHQVHYVQNITDVDDPLFERAERDGVDWRELGTSQIDLFRKDMETLAVIPPKDYIGAIESIDEVIEMVSTLLEEGAAYVVDDPEYPDVYASINATENFGYESNYDAATMAELFAERGGDPDRPGKRNPMDALLWRAAREGEPSWESPFGPGRPGWHIECSAIATNRLGHSFDIQGGGSDLMFPHHEFSAAHAEAAHGVERMAKHYVHAGMISQDGVKMSKSLGNLEFVHRLTAAGHEPGAIRLGVYAHHYRGDRDWSDEILAAAEARLALWRSAITVATDVQAAVDAVAQLRTHLSNDLDTPAALAAVDAWAEAALKDTGNVSDTADQFDTPEFTPAGRILAAAVDALLGVRL.

Residue Cys48 coordinates Zn(2+). L-cysteinyl-5'-AMP is bound by residues Cys48–Thr51, Thr63, and Asn86–Thr88. The short motif at Ile50 to His60 is the 'HIGH' region element. The 'ERGGDP' region motif lies at Glu192–Pro197. L-cysteinyl-5'-AMP is bound at residue Trp232. Residue Cys236 coordinates Zn(2+). Gly254–Asp256 contacts L-cysteinyl-5'-AMP. Position 261 (His261) interacts with Zn(2+). Ile288 is an L-cysteinyl-5'-AMP binding site. The 'KMSKS' region signature appears at Lys294–Ser298.

It belongs to the class-I aminoacyl-tRNA synthetase family. MshC subfamily. In terms of assembly, monomer. Zn(2+) is required as a cofactor.

It catalyses the reaction 1D-myo-inositol 2-amino-2-deoxy-alpha-D-glucopyranoside + L-cysteine + ATP = 1D-myo-inositol 2-(L-cysteinylamino)-2-deoxy-alpha-D-glucopyranoside + AMP + diphosphate + H(+). Its function is as follows. Catalyzes the ATP-dependent condensation of GlcN-Ins and L-cysteine to form L-Cys-GlcN-Ins. In Corynebacterium efficiens (strain DSM 44549 / YS-314 / AJ 12310 / JCM 11189 / NBRC 100395), this protein is L-cysteine:1D-myo-inositol 2-amino-2-deoxy-alpha-D-glucopyranoside ligase (mshC).